The primary structure comprises 479 residues: Poly(A) polymerase catalytic subunit (479 aa).

Active-site residues include D202 and D204. 3 residues coordinate Ca(2+): D202, D204, and D253.

It belongs to the poxviridae poly(A) polymerase catalytic subunit family. Heterodimer of a large (catalytic) subunit and a small (regulatory) subunit.

The enzyme catalyses RNA(n) + ATP = RNA(n)-3'-adenine ribonucleotide + diphosphate. In terms of biological role, polymerase that creates the 3'-poly(A) tail of mRNA's. This Bos taurus (Bovine) protein is Poly(A) polymerase catalytic subunit (OPG063).